Here is an 84-residue protein sequence, read N- to C-terminus: Large ribosomal subunit protein bL27 (84 aa).

The disordered stretch occupies residues 1 to 21 (MAHKKAGGSTRNGRDSESKRL).

Belongs to the bacterial ribosomal protein bL27 family.

The sequence is that of Large ribosomal subunit protein bL27 from Baumannia cicadellinicola subsp. Homalodisca coagulata.